A 246-amino-acid polypeptide reads, in one-letter code: Auxin-responsive protein IAA25 (246 aa).

The disordered stretch occupies residues 1–22 (MKSSSVAPRLKQERQDDCKFQE). Positions 10-22 (LKQERQDDCKFQE) are enriched in basic and acidic residues. The short motif at 28-32 (LELRL) is the EAR-like (transcriptional repression) element. One can recognise a PB1 domain in the interval 143–238 (TMFVKVNLEG…SVKRLYIAQD (96 aa)).

The protein belongs to the Aux/IAA family. In terms of assembly, homodimers and heterodimers. As to expression, highly expressed in flowers. Expressed in roots and seedlings.

The protein resides in the nucleus. Its function is as follows. Aux/IAA proteins are short-lived transcriptional factors that function as repressors of early auxin response genes at low auxin concentrations. This is Auxin-responsive protein IAA25 (IAA25) from Oryza sativa subsp. japonica (Rice).